The chain runs to 506 residues: Proline--tRNA ligase (506 aa).

This sequence belongs to the class-II aminoacyl-tRNA synthetase family. ProS type 3 subfamily. In terms of assembly, homodimer.

The protein localises to the cytoplasm. It carries out the reaction tRNA(Pro) + L-proline + ATP = L-prolyl-tRNA(Pro) + AMP + diphosphate. Functionally, catalyzes the attachment of proline to tRNA(Pro) in a two-step reaction: proline is first activated by ATP to form Pro-AMP and then transferred to the acceptor end of tRNA(Pro). In Akkermansia muciniphila (strain ATCC BAA-835 / DSM 22959 / JCM 33894 / BCRC 81048 / CCUG 64013 / CIP 107961 / Muc), this protein is Proline--tRNA ligase.